The chain runs to 35 residues: Turripeptide gsp9a (35 aa).

4-hydroxyproline is present on residues P3 and P4. 3 disulfide bridges follow: C7–C22, C12–C26, and C18–C33. E14 and E17 each carry 4-carboxyglutamate.

As to expression, expressed by the venom duct.

It localises to the secreted. This chain is Turripeptide gsp9a, found in Gemmula speciosa (Splendid gem-turris).